The sequence spans 501 residues: L-arabinose isomerase (501 aa).

4 residues coordinate Mn(2+): Glu-306, Glu-333, His-350, and His-449.

Belongs to the arabinose isomerase family. The cofactor is Mn(2+).

The enzyme catalyses beta-L-arabinopyranose = L-ribulose. It participates in carbohydrate degradation; L-arabinose degradation via L-ribulose; D-xylulose 5-phosphate from L-arabinose (bacterial route): step 1/3. Catalyzes the conversion of L-arabinose to L-ribulose. This is L-arabinose isomerase from Herpetosiphon aurantiacus (strain ATCC 23779 / DSM 785 / 114-95).